The chain runs to 348 residues: Ubiquitin thioesterase OTU1 (348 aa).

Residues 1–11 (MFGPAKGRHFG) are compositionally biased toward basic residues. The segment at 1-39 (MFGPAKGRHFGVHPAPGFPGGVSQQAAGTKAGPAGAWPV) is disordered. Residues 50-128 (RCKAKDGTHV…IIEEDQTRPR (79 aa)) are UBX-like. One can recognise an OTU domain in the interval 149–274 (LTRTVVPADN…GIHYDPLQRN (126 aa)). The cys-loop stretch occupies residues 154 to 160 (VPADNSC). Aspartate 157 is a catalytic residue. Catalysis depends on cysteine 160, which acts as the Nucleophile. Positions 213–223 (IKRDDTWGGAI) are variable-loop. A his-loop region spans residues 263-267 (YDGIH). Isoleucine 266 provides a ligand contact to substrate. Residue histidine 267 is part of the active site. Positions 291 to 296 (DIVLVQ) are S2 site. The segment at 318 to 342 (LRCMVCQKGLTGQAEAREHAKETGH) adopts a C2H2-type zinc-finger fold. Histidine 342 is a catalytic residue.

As to quaternary structure, interacts with VCP; the interaction is direct. Interacts with FAF2/UBXD8. Interacts with DERL1; however interaction is dependent on the UBAX-like region, suggesting that it may be indirect. Interacts with PLAA, UBXN6 and VCP; may form a complex involved in macroautophagy.

The protein localises to the cytoplasm. The enzyme catalyses Thiol-dependent hydrolysis of ester, thioester, amide, peptide and isopeptide bonds formed by the C-terminal Gly of ubiquitin (a 76-residue protein attached to proteins as an intracellular targeting signal).. Hydrolase that can remove conjugated ubiquitin from proteins and participates in endoplasmic reticulum-associated degradation (ERAD) for misfolded lumenal proteins. May act by triming the ubiquitin chain on the associated substrate to facilitate their threading through the VCP/p97 pore. Ubiquitin moieties on substrates may present a steric impediment to the threading process when the substrate is transferred to the VCP pore and threaded through VCP's axial channel. Mediates deubiquitination of 'Lys-27'-, 'Lys-29'- and 'Lys-33'-linked polyubiquitin chains. Also able to hydrolyze 'Lys-11'-linked ubiquitin chains. Cleaves both polyubiquitin and di-ubiquitin. May play a role in macroautophagy, regulating for instance the clearance of damaged lysosomes. May recruit PLAA, UBXN6 and VCP to damaged lysosome membranes decorated with K48-linked ubiquitin chains and remove these chains allowing autophagosome formation. This Homo sapiens (Human) protein is Ubiquitin thioesterase OTU1 (YOD1).